Here is a 554-residue protein sequence, read N- to C-terminus: Chaperonin GroEL (554 aa).

ATP contacts are provided by residues 30–33 (TLGP), lysine 51, 87–91 (DGTTT), glycine 415, 479–481 (NAA), and aspartate 495.

This sequence belongs to the chaperonin (HSP60) family. In terms of assembly, forms a cylinder of 14 subunits composed of two heptameric rings stacked back-to-back. Interacts with the co-chaperonin GroES.

Its subcellular location is the cytoplasm. The enzyme catalyses ATP + H2O + a folded polypeptide = ADP + phosphate + an unfolded polypeptide.. Functionally, together with its co-chaperonin GroES, plays an essential role in assisting protein folding. The GroEL-GroES system forms a nano-cage that allows encapsulation of the non-native substrate proteins and provides a physical environment optimized to promote and accelerate protein folding. The polypeptide is Chaperonin GroEL (Nitrosococcus oceani (strain ATCC 19707 / BCRC 17464 / JCM 30415 / NCIMB 11848 / C-107)).